Here is a 372-residue protein sequence, read N- to C-terminus: MTQSRRMLVLRAVVEDYIRSQEPVGSTSLTRDHDLGVSSATIRNDMAALEDEGYLIQPHTSAGRVPTEKGYRYFVDRLATVVPLSEAQRRGINSFLSGSVSLKDALQRSARLLSEITGQVAVVASPSLAKATLRHVEMVPVAMTTLLAVVITDTGRVAQHGLTIASMPAVDEINRLSNTVNEQCDGLSLSKSAETVRSIAASAGYESVRGVADALADAFESMALDERANELYMSGTSHLAHSRSLADLAPLFDALEEQVVLMKLMSNLSEETNASGVGVAIGSEMHTPGLLHASVVSSGYGRSGAAGEPAGNDPVGEPETESETESQTNDTEPIAFVGSIGPTHMDYAATMAAVRAVARYLTAFLSEGRTQD.

The segment at 300–334 (YGRSGAAGEPAGNDPVGEPETESETESQTNDTEPI) is disordered.

This sequence belongs to the HrcA family.

Its function is as follows. Negative regulator of class I heat shock genes (grpE-dnaK-dnaJ and groELS operons). Prevents heat-shock induction of these operons. The polypeptide is Heat-inducible transcription repressor HrcA (Bifidobacterium longum (strain DJO10A)).